A 477-amino-acid chain; its full sequence is 23S rRNA (uracil(1939)-C(5))-methyltransferase RlmD (477 aa).

A TRAM domain is found at 7–66; that stretch reads KTENFPPDWLLVESLDLEAQGVAHRADGKVVFIKGALPFELVSANVHRKKNNWEQGVVTA. 4 residues coordinate [4Fe-4S] cluster: C79, C89, C92, and C171. Residues Q280, F309, N314, E330, N365, and D386 each coordinate S-adenosyl-L-methionine. C432 functions as the Nucleophile in the catalytic mechanism.

It belongs to the class I-like SAM-binding methyltransferase superfamily. RNA M5U methyltransferase family. RlmD subfamily.

It carries out the reaction uridine(1939) in 23S rRNA + S-adenosyl-L-methionine = 5-methyluridine(1939) in 23S rRNA + S-adenosyl-L-homocysteine + H(+). Functionally, catalyzes the formation of 5-methyl-uridine at position 1939 (m5U1939) in 23S rRNA. The chain is 23S rRNA (uracil(1939)-C(5))-methyltransferase RlmD from Albidiferax ferrireducens (strain ATCC BAA-621 / DSM 15236 / T118) (Rhodoferax ferrireducens).